Consider the following 708-residue polypeptide: MANNDKQLMFTRNIGIMAHIDAGKTTTSERILFYTGLTHKIGETHDGTATMDWMAQEQERGITITSAATTTFWNYLGNRYKINLIDTPGHVDFTVEVERSLRVLDGAVATFCAVGGVEPQSETVWRQADKYNVPRIGYVNKMDRSGANYYEVVRQLKDVLGANPCPIQIPIGAEETFKGVVDLIKMKAIFWHDETMGAEYSVEEIPADLQAEAEEWRDKMLEALAECDDAIMEKYFDDPSTITEEEIMVAIRKGTLAMQINPMTCGSSFKNKGVQTLLDAVCAFLPSPEDTPAIEGTDPSDPDKIITRKPLFEEPLTALAFKIATDPYVGRLCFFRVYAGSINAGSYVLNTRSGKKERISRLFQMHSNKQNPMEVIGCGDIGAGVGFKDIRTGDTLCDENHPITLESMEFPEPVIGIAVEPKTQKDMDKLGMGLAKLAEEDPTFRVQTNEETGQTVISGMGELHLDIIIDRLRREFKVECNQGRPQVTYKEAITQPVELREVYKKQSGGRGKFADIIVRMEPADESFEGTLQFIDEVKGGNIPKEFIPSVQKGFEKAMKNGVLAGYPLDKLKVTLIDGSFHPVDSDQLSFEIAAIQAFKNASAKAGPVLMEPIMQMEVVTPEESMGDVIGDLNKRRGQVEGMETSRTGARIVKAKVPLAETFGYVTALRTITSGRATSSMQFSHYAQVSSSIAKQVLTEVQGRVDLIK.

A tr-type G domain is found at 9 to 289 (MFTRNIGIMA…AVCAFLPSPE (281 aa)). GTP contacts are provided by residues 18 to 25 (AHIDAGKT), 86 to 90 (DTPGH), and 140 to 143 (NKMD).

It belongs to the TRAFAC class translation factor GTPase superfamily. Classic translation factor GTPase family. EF-G/EF-2 subfamily.

Its subcellular location is the cytoplasm. Functionally, catalyzes the GTP-dependent ribosomal translocation step during translation elongation. During this step, the ribosome changes from the pre-translocational (PRE) to the post-translocational (POST) state as the newly formed A-site-bound peptidyl-tRNA and P-site-bound deacylated tRNA move to the P and E sites, respectively. Catalyzes the coordinated movement of the two tRNA molecules, the mRNA and conformational changes in the ribosome. This chain is Elongation factor G, found in Parabacteroides distasonis (strain ATCC 8503 / DSM 20701 / CIP 104284 / JCM 5825 / NCTC 11152).